The chain runs to 675 residues: DNA gyrase subunit B (675 aa).

A Toprim domain is found at 453–567; sequence SELYVVEGDS…NGHVFLAQPP (115 aa). Residues glutamate 459, aspartate 532, and aspartate 534 each contribute to the Mg(2+) site.

Belongs to the type II topoisomerase GyrB family. In terms of assembly, heterotetramer, composed of two GyrA and two GyrB chains. In the heterotetramer, GyrA contains the active site tyrosine that forms a transient covalent intermediate with DNA, while GyrB binds cofactors and catalyzes ATP hydrolysis. Requires Mg(2+) as cofactor. It depends on Mn(2+) as a cofactor. Ca(2+) serves as cofactor.

It localises to the cytoplasm. It carries out the reaction ATP-dependent breakage, passage and rejoining of double-stranded DNA.. Its function is as follows. A type II topoisomerase that negatively supercoils closed circular double-stranded (ds) DNA in an ATP-dependent manner to modulate DNA topology and maintain chromosomes in an underwound state. Negative supercoiling favors strand separation, and DNA replication, transcription, recombination and repair, all of which involve strand separation. Also able to catalyze the interconversion of other topological isomers of dsDNA rings, including catenanes and knotted rings. Type II topoisomerases break and join 2 DNA strands simultaneously in an ATP-dependent manner. The chain is DNA gyrase subunit B from Mycobacterium tuberculosis (strain ATCC 25177 / H37Ra).